The primary structure comprises 130 residues: Large ribosomal subunit protein uL14 (130 aa).

The protein belongs to the universal ribosomal protein uL14 family. As to quaternary structure, part of the 50S ribosomal subunit. Forms a cluster with proteins L3 and L19. In the 70S ribosome, L14 and L19 interact and together make contacts with the 16S rRNA in bridges B5 and B8.

Its function is as follows. Binds to 23S rRNA. Forms part of two intersubunit bridges in the 70S ribosome. The sequence is that of Large ribosomal subunit protein uL14 from Leptospira biflexa serovar Patoc (strain Patoc 1 / Ames).